A 515-amino-acid polypeptide reads, in one-letter code: MDLENVSCPICLRKFDNLQALNAHLDVEHGFNDNEDSLGSNDSRLVNGKQKKARSVDSSAQKLKRSHWEKFKKGKSCCHTCGRTLNNNIGAINCRKCGKLYCRRHLPNMIKLNLSAQYDPRNGKWYNCCHDCFVTKPGYNDYGEVIDLTPEFFKVRNIKREDKNLRLLQLENRFVRLVDGLITLYNTYSRSIIHNLKMNSEMSKLERTVTPWRDDRSVLFCNICSEPFGLLLRKHHCRLCGMVVCDDANRNCSNEISIGYLMSAASDLPFEYNIQKDDLLHIPISIRLCSHCIDMLFIGRKFNKDVRMPLSGIFAKYDSMQNISKVIDSLLPIFEDSLNSLKVETAKDSENTLDPKNLNDLARLRHKLLNSFNLYNTLTRQLLSVEPQSHLERQLQNSIKIASAAYINEKILPLKSLPAILNPEGHKTNEDGQKAEPEVKKLSQLMIENLTIKEVKELREELMVLKEQSYLIESTIQDYKKQRRLEEIVTLNKNLEELHSRIHTVQSKLGDHGFN.

Residues 6–29 (VSCPICLRKFDNLQALNAHLDVEH) form a C2H2-type zinc finger. A disordered region spans residues 36–58 (DSLGSNDSRLVNGKQKKARSVDS). The FYVE-type 1; atypical zinc finger occupies 72–137 (KKGKSCCHTC…CCHDCFVTKP (66 aa)). Zn(2+)-binding residues include C78, C81, C94, C97, C102, H105, C129, C132, C221, C224, C237, C240, C245, C252, C289, and C292. The FYVE-type 2 zinc finger occupies 215 to 297 (DRSVLFCNIC…LCSHCIDMLF (83 aa)).

In terms of assembly, interacts with VPS21, VPS45, PEP3 and PEP5.

The protein resides in the vacuole membrane. Its function is as follows. Required for vacuole segregation and vacuole protein sorting. Possibly part of a complex which tethers the vacuole membrane to microtubules, either directly or via kinesin or dynein-like motor proteins. Probably functions in several interorganelle traffic pathways. This is Vacuolar segregation protein PEP7 (PEP7) from Saccharomyces cerevisiae (strain ATCC 204508 / S288c) (Baker's yeast).